The sequence spans 135 residues: QECKCHGVSGSCTLKTCWVTLPHFREVGYALKDKYEQAVMVEAVRGRRHVVPTFLKLKIPQNNSKPAETDLVYVDRSPNFCEKDNATGSIGTYGRFCNRTSTQADSCELLCCGRGYKTFQYTRTGQCHCKFHWCC.

Disulfide bonds link Cys-3/Cys-17 and Cys-5/Cys-12. Ser-9 carries the O-palmitoleoyl serine; by PORCN lipid modification. N-linked (GlcNAc...) asparagine glycans are attached at residues Asn-62, Asn-85, and Asn-98. 3 cysteine pairs are disulfide-bonded: Cys-81-Cys-112, Cys-97-Cys-107, and Cys-134-Cys-135.

It belongs to the Wnt family. Post-translationally, palmitoleoylation is required for efficient binding to frizzled receptors. Depalmitoleoylation leads to Wnt signaling pathway inhibition.

Its subcellular location is the secreted. The protein localises to the extracellular space. The protein resides in the extracellular matrix. In terms of biological role, ligand for members of the frizzled family of seven transmembrane receptors. Probable developmental protein. May be a signaling molecule which affects the development of discrete regions of tissues. Is likely to signal over only few cell diameters. The protein is Protein Wnt-7c (wnt7c) of Xenopus laevis (African clawed frog).